Consider the following 725-residue polypeptide: Gamma-tubulin complex component 5 (725 aa).

The interval 222-246 (TENEEKMSDNASASSGSDQGPSSRQ) is disordered. The span at 232–244 (ASASSGSDQGPSS) shows a compositional bias: low complexity.

The protein belongs to the TUBGCP family. In terms of assembly, component of the gamma-tubulin ring complex (gTuRC) consisting of TUBGCP2, TUBGCP3, TUBGCP4, TUBGCP5 and TUBGCP6 and gamma-tubulin TUBG1 or TUBG2. TUBGCP2, TUBGCP3, TUBGCP4, TUBGCP5 and TUBGCP6 assemble in a 5:5:2:1:1 stoichiometry; each is associated with a gamma-tubulin, thereby arranging 14 gamma-tubulins in a helical manner. Gamma-tubulin at the first position is blocked by TUBGCP3 at the last position, allowing 13 protafilaments to grow into a microtubule. The gTuRC (via TUBGCP3 and TUBGCP6) interacts with ACTB and MZT1; the interactions form a luminal bridge that stabilizes the initial structure during complex assembly. The gTuRC (via TUBGCP2) interacts with MZT2A/MZT2B and CDK5RAP2 (via CM1 motif); the interactions play a role in gTuRC activation.

It is found in the cytoplasm. The protein localises to the cytoskeleton. The protein resides in the microtubule organizing center. It localises to the centrosome. Component of the gamma-tubulin ring complex (gTuRC) which mediates microtubule nucleation. The gTuRC regulates the minus-end nucleation of alpha-beta tubulin heterodimers that grow into microtubule protafilaments, a critical step in centrosome duplication and spindle formation. The polypeptide is Gamma-tubulin complex component 5 (TUBGCP5) (Macaca fascicularis (Crab-eating macaque)).